The sequence spans 505 residues: UDP-N-acetylmuramoyl-L-alanyl-D-glutamate--2,6-diaminopimelate ligase (505 aa).

Ser42 serves as a coordination point for UDP-N-acetyl-alpha-D-muramoyl-L-alanyl-D-glutamate. 126-132 (GTNGKTT) lines the ATP pocket. Residues 168 to 169 (TT), Ser195, Gln201, and Arg203 contribute to the UDP-N-acetyl-alpha-D-muramoyl-L-alanyl-D-glutamate site. Lys235 is modified (N6-carboxylysine). Meso-2,6-diaminopimelate contacts are provided by residues Arg399, 423-426 (DNPR), Gly474, and Glu478. The Meso-diaminopimelate recognition motif motif lies at 423–426 (DNPR).

The protein belongs to the MurCDEF family. MurE subfamily. It depends on Mg(2+) as a cofactor. In terms of processing, carboxylation is probably crucial for Mg(2+) binding and, consequently, for the gamma-phosphate positioning of ATP.

It localises to the cytoplasm. The catalysed reaction is UDP-N-acetyl-alpha-D-muramoyl-L-alanyl-D-glutamate + meso-2,6-diaminopimelate + ATP = UDP-N-acetyl-alpha-D-muramoyl-L-alanyl-gamma-D-glutamyl-meso-2,6-diaminopimelate + ADP + phosphate + H(+). Its pathway is cell wall biogenesis; peptidoglycan biosynthesis. Catalyzes the addition of meso-diaminopimelic acid to the nucleotide precursor UDP-N-acetylmuramoyl-L-alanyl-D-glutamate (UMAG) in the biosynthesis of bacterial cell-wall peptidoglycan. The polypeptide is UDP-N-acetylmuramoyl-L-alanyl-D-glutamate--2,6-diaminopimelate ligase (Synechocystis sp. (strain ATCC 27184 / PCC 6803 / Kazusa)).